The sequence spans 340 residues: Phosphoribosylformylglycinamidine cyclo-ligase (340 aa).

This sequence belongs to the AIR synthase family.

It localises to the cytoplasm. It carries out the reaction 2-formamido-N(1)-(5-O-phospho-beta-D-ribosyl)acetamidine + ATP = 5-amino-1-(5-phospho-beta-D-ribosyl)imidazole + ADP + phosphate + H(+). The protein operates within purine metabolism; IMP biosynthesis via de novo pathway; 5-amino-1-(5-phospho-D-ribosyl)imidazole from N(2)-formyl-N(1)-(5-phospho-D-ribosyl)glycinamide: step 2/2. This Macrococcus caseolyticus (strain JCSC5402) (Macrococcoides caseolyticum) protein is Phosphoribosylformylglycinamidine cyclo-ligase.